A 401-amino-acid polypeptide reads, in one-letter code: Glycerol-1-phosphate dehydrogenase [NAD(P)+] (401 aa).

Residues Asp-57, 118-122 (GTIHD), and 140-143 (TAPS) contribute to the NAD(+) site. Asp-145 contributes to the substrate binding site. Ser-149 contacts NAD(+). Residue Asp-192 participates in substrate binding. 2 residues coordinate Ni(2+): Asp-192 and His-272. Residue His-276 participates in substrate binding. A Ni(2+)-binding site is contributed by His-292.

Belongs to the glycerol-1-phosphate dehydrogenase family. As to quaternary structure, homodimer. It depends on Ni(2+) as a cofactor.

It localises to the cytoplasm. The catalysed reaction is sn-glycerol 1-phosphate + NAD(+) = dihydroxyacetone phosphate + NADH + H(+). It carries out the reaction sn-glycerol 1-phosphate + NADP(+) = dihydroxyacetone phosphate + NADPH + H(+). Its function is as follows. Catalyzes the NAD(P)H-dependent reduction of dihydroxyacetonephosphate (DHAP or glycerone phosphate) to glycerol 1-phosphate (G1P). The G1P thus generated is probably used for the synthesis of phosphoglycerolipids in Gram-positive bacterial species. This Bacillus licheniformis (strain ATCC 14580 / DSM 13 / JCM 2505 / CCUG 7422 / NBRC 12200 / NCIMB 9375 / NCTC 10341 / NRRL NRS-1264 / Gibson 46) protein is Glycerol-1-phosphate dehydrogenase [NAD(P)+].